The primary structure comprises 473 residues: Cysteine--tRNA ligase (473 aa).

Cysteine 28 provides a ligand contact to Zn(2+). The 'HIGH' region motif lies at 30–40 (PTVYNMPHIGN). Cysteine 213, histidine 238, and glutamate 242 together coordinate Zn(2+). Positions 270-274 (KMSKS) match the 'KMSKS' region motif. Lysine 273 contacts ATP.

Belongs to the class-I aminoacyl-tRNA synthetase family. It depends on Zn(2+) as a cofactor.

The protein resides in the cytoplasm. The catalysed reaction is tRNA(Cys) + L-cysteine + ATP = L-cysteinyl-tRNA(Cys) + AMP + diphosphate. The polypeptide is Cysteine--tRNA ligase (Methanosarcina mazei (strain ATCC BAA-159 / DSM 3647 / Goe1 / Go1 / JCM 11833 / OCM 88) (Methanosarcina frisia)).